The chain runs to 209 residues: Uridine kinase (209 aa).

An ATP-binding site is contributed by 12-19; sequence GGSGGGKT.

The protein belongs to the uridine kinase family.

It localises to the cytoplasm. It carries out the reaction uridine + ATP = UMP + ADP + H(+). The catalysed reaction is cytidine + ATP = CMP + ADP + H(+). It functions in the pathway pyrimidine metabolism; CTP biosynthesis via salvage pathway; CTP from cytidine: step 1/3. Its pathway is pyrimidine metabolism; UMP biosynthesis via salvage pathway; UMP from uridine: step 1/1. The chain is Uridine kinase from Streptococcus agalactiae serotype III (strain NEM316).